We begin with the raw amino-acid sequence, 180 residues long: ATP-dependent protease subunit HslV (180 aa).

Thr-8 is an active-site residue. Positions 165, 168, and 171 each coordinate Na(+).

Belongs to the peptidase T1B family. HslV subfamily. As to quaternary structure, a double ring-shaped homohexamer of HslV is capped on each side by a ring-shaped HslU homohexamer. The assembly of the HslU/HslV complex is dependent on binding of ATP.

The protein resides in the cytoplasm. It carries out the reaction ATP-dependent cleavage of peptide bonds with broad specificity.. Allosterically activated by HslU binding. Protease subunit of a proteasome-like degradation complex believed to be a general protein degrading machinery. The protein is ATP-dependent protease subunit HslV of Macrococcus caseolyticus (strain JCSC5402) (Macrococcoides caseolyticum).